Here is a 295-residue protein sequence, read N- to C-terminus: Protease HtpX (295 aa).

The next 2 helical transmembrane spans lie at 5-25 and 43-63; these read VILF…SMRL and ALLI…LAIS. Residue His148 coordinates Zn(2+). The active site involves Glu149. A Zn(2+)-binding site is contributed by His152. A run of 2 helical transmembrane segments spans residues 159 to 179 and 198 to 218; these read VTLA…ARII and FFIT…LIVL. A Zn(2+)-binding site is contributed by Glu225.

It belongs to the peptidase M48B family. It depends on Zn(2+) as a cofactor.

It is found in the cell inner membrane. In Nitrosococcus oceani (strain ATCC 19707 / BCRC 17464 / JCM 30415 / NCIMB 11848 / C-107), this protein is Protease HtpX.